Consider the following 295-residue polypeptide: Very long chain fatty acid elongase 5 (295 aa).

Transmembrane regions (helical) follow at residues 26-46 (WLLLDNYVPTILFTALYLFIV), 64-84 (ILVVYNLGLTLLSLYMFYELV), 112-132 (VLWWYYFSKLIEFMDTFFFIL), 150-170 (MLNIWWFVMNWVPCGHSYFGA), 175-192 (FIHVLMYSYYGLSAIPAM), 207-223 (LTQFVLTMTQTTCAMIW), and 227-247 (FPMGWLYFQNCYMISLIILFG). Positions 265 to 295 (YQNGSASAVNGHTNSFSSLEDNVKQRKQRQD) are disordered. Residues 266–284 (QNGSASAVNGHTNSFSSLE) show a composition bias toward polar residues. A compositionally biased stretch (basic and acidic residues) spans 285–295 (DNVKQRKQRQD).

The protein belongs to the ELO family. ELOVL5 subfamily.

It localises to the endoplasmic reticulum membrane. Its subcellular location is the cell projection. It is found in the dendrite. It catalyses the reaction a very-long-chain acyl-CoA + malonyl-CoA + H(+) = a very-long-chain 3-oxoacyl-CoA + CO2 + CoA. The catalysed reaction is (6Z,9Z,12Z)-octadecatrienoyl-CoA + malonyl-CoA + H(+) = (8Z,11Z,14Z)-3-oxoeicosatrienoyl-CoA + CO2 + CoA. It carries out the reaction (9Z,12Z,15Z)-octadecatrienoyl-CoA + malonyl-CoA + H(+) = (11Z,14Z,17Z)-3-oxoeicosatrienoyl-CoA + CO2 + CoA. The enzyme catalyses (9Z)-hexadecenoyl-CoA + malonyl-CoA + H(+) = 3-oxo-(11Z)-octadecenoyl-CoA + CO2 + CoA. It catalyses the reaction (9Z)-octadecenoyl-CoA + malonyl-CoA + H(+) = 3-oxo-(11Z)-eicosenoyl-CoA + CO2 + CoA. The catalysed reaction is (11Z)-octadecenoyl-CoA + malonyl-CoA + H(+) = 3-oxo-(13Z)-eicosenoyl-CoA + CO2 + CoA. It carries out the reaction (9Z,12Z)-octadecadienoyl-CoA + malonyl-CoA + H(+) = (11Z,14Z)-3-oxoicosa-11,14-dienoyl-CoA + CO2 + CoA. The enzyme catalyses (6Z,9Z,12Z,15Z)-octadecatetraenoyl-CoA + malonyl-CoA + H(+) = (8Z,11Z,14Z,17Z)-3-oxoicosatetraenoyl-CoA + CO2 + CoA. It catalyses the reaction (5Z,8Z,11Z,14Z)-eicosatetraenoyl-CoA + malonyl-CoA + H(+) = (7Z,10Z,13Z,16Z)-3-oxodocosatetraenoyl-CoA + CO2 + CoA. The catalysed reaction is (5Z,8Z,11Z,14Z,17Z)-eicosapentaenoyl-CoA + malonyl-CoA + H(+) = 3-oxo-(7Z,10Z,13Z,16Z,19Z)-docosapentaenoyl-CoA + CO2 + CoA. It participates in lipid metabolism; polyunsaturated fatty acid biosynthesis. In terms of biological role, catalyzes the first and rate-limiting reaction of the four reactions that constitute the long-chain fatty acids elongation cycle. This endoplasmic reticulum-bound enzymatic process allows the addition of 2 carbons to the chain of long- and very long-chain fatty acids (VLCFAs) per cycle. Condensing enzyme that acts specifically toward polyunsaturated acyl-CoA with the higher activity toward C18:3(n-6) acyl-CoA. May participate in the production of monounsaturated and of polyunsaturated VLCFAs of different chain lengths that are involved in multiple biological processes as precursors of membrane lipids and lipid mediators. In conditions where the essential linoleic and alpha linoleic fatty acids are lacking it is also involved in the synthesis of Mead acid from oleic acid. This is Very long chain fatty acid elongase 5 from Xenopus tropicalis (Western clawed frog).